The chain runs to 139 residues: Putative pre-16S rRNA nuclease (139 aa).

Belongs to the YqgF nuclease family.

The protein resides in the cytoplasm. Could be a nuclease involved in processing of the 5'-end of pre-16S rRNA. In Legionella pneumophila subsp. pneumophila (strain Philadelphia 1 / ATCC 33152 / DSM 7513), this protein is Putative pre-16S rRNA nuclease.